A 126-amino-acid chain; its full sequence is Large ribosomal subunit protein eL14 (126 aa).

Belongs to the eukaryotic ribosomal protein eL14 family.

This is Large ribosomal subunit protein eL14 (RPL14) from Tetrahymena thermophila (strain SB210).